Reading from the N-terminus, the 472-residue chain is MVIANSIKTSIPNYVIKDISLSDFGRKEIKIAETEMPGLMALRDKHHSDKPLNGAKIAGSLHMTIQTAVLIETLVDLGAQVKWASCNIFSTQDHAAAAIAEQGISVYAKKGESLDEYWQYTHYILDWGTDSPNMILDDGGDATGLLILGSKAEKDLSVLKNPSNEEEIALFNSIRSKLQEDSSFYSRIKGNIIGVTEETTTGVARLYQLQKQNALPFPAINVNDSVTKSKFDNLYGCRESLVDSIKRATDVMIAGKVALVMGFGDVGKGSAQSLRGLGAIVKVAEVDPICALQAAMEGFSVVTLNDVVEDIDIFVTATGNYQVITNDNLIKMKDEAIVCNIGHFDNEIDVASLKDYPWENIKPQVDHITLPSGNKIILLAEGRLVNLGCATGHPSFVMSNSFTNQVLAQIELFNKSDEYSKEVYVLPKHLDEMVARLHLDKIGAKLTKLTKDQADYINVSVEGPYKPEQYRY.

Positions 64, 138, and 198 each coordinate substrate. 199-201 lines the NAD(+) pocket; it reads TTT. Substrate contacts are provided by lysine 228 and aspartate 232. NAD(+)-binding positions include asparagine 233, 262–267, glutamate 285, asparagine 320, 341–343, and asparagine 386; these read GFGDVG and IGH.

It belongs to the adenosylhomocysteinase family. NAD(+) is required as a cofactor.

The protein resides in the cytoplasm. The enzyme catalyses S-adenosyl-L-homocysteine + H2O = L-homocysteine + adenosine. It functions in the pathway amino-acid biosynthesis; L-homocysteine biosynthesis; L-homocysteine from S-adenosyl-L-homocysteine: step 1/1. In terms of biological role, may play a key role in the regulation of the intracellular concentration of adenosylhomocysteine. This Prochlorococcus marinus subsp. pastoris (strain CCMP1986 / NIES-2087 / MED4) protein is Adenosylhomocysteinase.